The chain runs to 226 residues: MKAIKIAIDGPASSGKSTVAKIIAKNLGYTYLDTGAMYRSATYIALTHGYTDKEVALILEELEKNPISFKKAKDGSQLVFLGDEDVTLVIRQNDVTNNVSWVSALPEIREELVHQQRRIAQAGGIIMDGRDIGTVVLPDAELKIFLVASVEERAERRYKENLEKGIESDFETLKEEIAARDYKDSHRKVSPLKAAEDALIFDTTGVSIDGVVQFIQEKAEKIVDMS.

An ATP-binding site is contributed by 10 to 18 (GPASSGKST).

It is found in the cytoplasm. The catalysed reaction is CMP + ATP = CDP + ADP. It carries out the reaction dCMP + ATP = dCDP + ADP. This Streptococcus pyogenes serotype M6 (strain ATCC BAA-946 / MGAS10394) protein is Cytidylate kinase.